Reading from the N-terminus, the 977-residue chain is 2-oxoglutarate dehydrogenase E1 component (977 aa).

An RPE1 insert domain is found at 77–125 (VLNNRHLAKPAYREEFKGDTERSTAAYIDIREDASTGSTSKLPLEAKFG).

The protein belongs to the alpha-ketoglutarate dehydrogenase family. As to quaternary structure, homodimer. Part of the 2-oxoglutarate dehydrogenase (OGDH) complex composed of E1 (2-oxoglutarate dehydrogenase), E2 (dihydrolipoamide succinyltransferase) and E3 (dihydrolipoamide dehydrogenase); the complex contains multiple copies of the three enzymatic components (E1, E2 and E3). Requires thiamine diphosphate as cofactor.

The enzyme catalyses N(6)-[(R)-lipoyl]-L-lysyl-[protein] + 2-oxoglutarate + H(+) = N(6)-[(R)-S(8)-succinyldihydrolipoyl]-L-lysyl-[protein] + CO2. Functionally, E1 component of the 2-oxoglutarate dehydrogenase (OGDH) complex which catalyzes the decarboxylation of 2-oxoglutarate, the first step in the conversion of 2-oxoglutarate to succinyl-CoA and CO(2). In Rickettsia felis (strain ATCC VR-1525 / URRWXCal2) (Rickettsia azadi), this protein is 2-oxoglutarate dehydrogenase E1 component (sucA).